The sequence spans 373 residues: Dual-specificity RNA methyltransferase RlmN (373 aa).

The active-site Proton acceptor is the Glu94. Residues 100–339 (EDDRATLCVS…VIVRKTRGDD (240 aa)) enclose the Radical SAM core domain. Cysteines 107 and 344 form a disulfide. The [4Fe-4S] cluster site is built by Cys114, Cys118, and Cys121. Residues 168 to 169 (GE), Ser200, 222 to 224 (SIH), and Asn301 contribute to the S-adenosyl-L-methionine site. Catalysis depends on Cys344, which acts as the S-methylcysteine intermediate.

Belongs to the radical SAM superfamily. RlmN family. Requires [4Fe-4S] cluster as cofactor.

Its subcellular location is the cytoplasm. The catalysed reaction is adenosine(2503) in 23S rRNA + 2 reduced [2Fe-2S]-[ferredoxin] + 2 S-adenosyl-L-methionine = 2-methyladenosine(2503) in 23S rRNA + 5'-deoxyadenosine + L-methionine + 2 oxidized [2Fe-2S]-[ferredoxin] + S-adenosyl-L-homocysteine. It carries out the reaction adenosine(37) in tRNA + 2 reduced [2Fe-2S]-[ferredoxin] + 2 S-adenosyl-L-methionine = 2-methyladenosine(37) in tRNA + 5'-deoxyadenosine + L-methionine + 2 oxidized [2Fe-2S]-[ferredoxin] + S-adenosyl-L-homocysteine. Functionally, specifically methylates position 2 of adenine 2503 in 23S rRNA and position 2 of adenine 37 in tRNAs. m2A2503 modification seems to play a crucial role in the proofreading step occurring at the peptidyl transferase center and thus would serve to optimize ribosomal fidelity. The sequence is that of Dual-specificity RNA methyltransferase RlmN from Shewanella woodyi (strain ATCC 51908 / MS32).